The primary structure comprises 984 residues: Shutoff protein (984 aa).

The interval 131-231 (GVAAESDPSD…DLERDALVAP (101 aa)) is disordered. Over residues 137–147 (DPSDDEPDPEP) the composition is skewed to acidic residues. The span at 148–159 (EYDHREADHDSD) shows a compositional bias: basic and acidic residues. Positions 176–186 (VDEEPQDDSPS) are enriched in acidic residues. The span at 190-202 (TASTVIEEAQTSA) shows a compositional bias: polar residues. Positions 205–216 (DSHDDDTHRDDG) are enriched in basic and acidic residues. Residues 411 to 476 (LMETLLQPFA…AVRYTATLEL (66 aa)) are binding to host EIF4G. The region spanning 479–597 (RVFREPSMVK…RLYSLPNPTA (119 aa)) is the RRM domain. 2 disordered regions span residues 810–853 (GVYK…GNRA) and 876–984 (KVGP…RQEE). Position 812 is a phosphotyrosine; by host (Y812). Basic residues predominate over residues 913–923 (AGGRRFGRRNT). Over residues 945–958 (RGQQGEHPTTSPSA) the composition is skewed to low complexity.

The protein belongs to the adenoviridae shutoff protein family. In terms of assembly, monomer. Interacts with hexon protein; this interaction allows chaperoning and trimerization of hexon proteins. Interacts (via N-terminus) with host initiation factor EIF4G (via C-terminus). Interacts (via RRM domain) with viral mRNAs that contain the tripartite leader; this interaction allows ribosome shunting and expression of viral late mRNAs. Might be cleaved by the viral protease. In terms of processing, phosphorylated. Tyrosine phosphorylation enhances preferential binding to tripartite leader mRNAs and allows ribosome shunting. Post-translationally, methylated. Asymmetric dimethylation by host PRMT1 of the Arg/Gly-rich region may regulate shutoff protein binding to hexon and promote the capsid assembly in the nucleus.

It localises to the host cytoplasm. Functionally, protein that inhibits host translation while promoting late viral translation by ribosome shunting. Blocks host cap-dependent translation by binding to eIF4G, displacing MKNK1 from cap initiation complexes and preventing EIF4E phosphorylation. Binds to the tripartite leader sequence of viral late mRNAs and recruits host eIF4G, PABPC1/poly-A binding protein and 40S ribosomes subunits on viral mRNAs, allowing ribosome shunting and efficient translation of late viral mRNAs even though conventional translation via ribosome scanning from the cap has been shut off in the host cell. During assembly, acts as a chaperone protein that helps hexon proteins assembly into trimers. This is Shutoff protein from Galliformes (FAdV-1).